The following is a 483-amino-acid chain: Siroheme synthase (483 aa).

Residues 1–203 (MNYFPIFANL…RQNTLAEREL (203 aa)) are precorrin-2 dehydrogenase /sirohydrochlorin ferrochelatase. Residues 22-23 (AV) and 43-44 (KH) contribute to the NAD(+) site. Residue Ser-128 is modified to Phosphoserine. The interval 217–483 (GSVSLVGAGP…GGLNAGQRAA (267 aa)) is uroporphyrinogen-III C-methyltransferase. Position 226 (Pro-226) interacts with S-adenosyl-L-methionine. Catalysis depends on Asp-249, which acts as the Proton acceptor. Lys-271 (proton donor) is an active-site residue. S-adenosyl-L-methionine is bound by residues 302 to 304 (GGD), Val-307, 332 to 333 (TA), Met-384, and Gly-413.

In the N-terminal section; belongs to the precorrin-2 dehydrogenase / sirohydrochlorin ferrochelatase family. The protein in the C-terminal section; belongs to the precorrin methyltransferase family.

It carries out the reaction uroporphyrinogen III + 2 S-adenosyl-L-methionine = precorrin-2 + 2 S-adenosyl-L-homocysteine + H(+). The catalysed reaction is precorrin-2 + NAD(+) = sirohydrochlorin + NADH + 2 H(+). The enzyme catalyses siroheme + 2 H(+) = sirohydrochlorin + Fe(2+). It participates in cofactor biosynthesis; adenosylcobalamin biosynthesis; precorrin-2 from uroporphyrinogen III: step 1/1. Its pathway is cofactor biosynthesis; adenosylcobalamin biosynthesis; sirohydrochlorin from precorrin-2: step 1/1. The protein operates within porphyrin-containing compound metabolism; siroheme biosynthesis; precorrin-2 from uroporphyrinogen III: step 1/1. It functions in the pathway porphyrin-containing compound metabolism; siroheme biosynthesis; siroheme from sirohydrochlorin: step 1/1. It participates in porphyrin-containing compound metabolism; siroheme biosynthesis; sirohydrochlorin from precorrin-2: step 1/1. Functionally, multifunctional enzyme that catalyzes the SAM-dependent methylations of uroporphyrinogen III at position C-2 and C-7 to form precorrin-2 via precorrin-1. Then it catalyzes the NAD-dependent ring dehydrogenation of precorrin-2 to yield sirohydrochlorin. Finally, it catalyzes the ferrochelation of sirohydrochlorin to yield siroheme. The sequence is that of Siroheme synthase from Neisseria meningitidis serogroup B (strain ATCC BAA-335 / MC58).